The primary structure comprises 291 residues: Asialoglycoprotein receptor 1 (291 aa).

Basic and acidic residues predominate over residues 1–19 (MTKECQDLQHLDNEESDHH). A disordered region spans residues 1–27 (MTKECQDLQHLDNEESDHHQLRKGPPP). At 1–40 (MTKECQDLQHLDNEESDHHQLRKGPPPSQPLLQRLCSGPR) the chain is on the cytoplasmic side. The Endocytosis signal signature appears at 5–8 (CQDL). Ser16 is subject to Phosphoserine. Residue Cys36 is the site of S-palmitoyl cysteine attachment. A helical; Signal-anchor for type II membrane protein membrane pass occupies residues 41–61 (LLLLSLGLSLLLLVVVCVIGS). A coiled-coil region spans residues 61–123 (SQNSQLQKEL…KDLSEDHSSL (63 aa)). The Extracellular segment spans residues 62-291 (QNSQLQKELR…DKASQEPPLL (230 aa)). Asn79 and Asn147 each carry an N-linked (GlcNAc...) asparagine glycan. Cystine bridges form between Cys154/Cys165, Cys182/Cys277, and Cys255/Cys269. In terms of domain architecture, C-type lectin spans 161-278 (HERSCYWFSR…CQRPYRWVCE (118 aa)). Ca(2+) is bound by residues Val191, Glu197, Asp216, Gln240, Asp242, Asp243, Glu253, Asp254, Asn265, Asp266, and Glu278. Ser285 is subject to Phosphoserine.

In terms of assembly, interacts with LASS2. Post-translationally, phosphorylated on a cytoplasmic Ser residue.

It is found in the membrane. Its function is as follows. Mediates the endocytosis of plasma glycoproteins to which the terminal sialic acid residue on their complex carbohydrate moieties has been removed. The receptor recognizes terminal galactose and N-acetylgalactosamine units. After ligand binding to the receptor, the resulting complex is internalized and transported to a sorting organelle, where receptor and ligand are disassociated. The receptor then returns to the cell membrane surface. In Pongo abelii (Sumatran orangutan), this protein is Asialoglycoprotein receptor 1 (ASGR1).